We begin with the raw amino-acid sequence, 86 residues long: UPF0437 protein Ava_4254 (86 aa).

Belongs to the UPF0437 family.

The protein is UPF0437 protein Ava_4254 of Trichormus variabilis (strain ATCC 29413 / PCC 7937) (Anabaena variabilis).